Reading from the N-terminus, the 461-residue chain is Glutamyl-tRNA reductase (461 aa).

Substrate-binding positions include 50-53, S111, 116-118, and Q122; these read TCNR and EPQ. C51 acts as the Nucleophile in catalysis. An NADP(+)-binding site is contributed by 191-196; the sequence is GAGEMA.

It belongs to the glutamyl-tRNA reductase family. Homodimer.

The enzyme catalyses (S)-4-amino-5-oxopentanoate + tRNA(Glu) + NADP(+) = L-glutamyl-tRNA(Glu) + NADPH + H(+). Its pathway is porphyrin-containing compound metabolism; protoporphyrin-IX biosynthesis; 5-aminolevulinate from L-glutamyl-tRNA(Glu): step 1/2. Its function is as follows. Catalyzes the NADPH-dependent reduction of glutamyl-tRNA(Glu) to glutamate 1-semialdehyde (GSA). The protein is Glutamyl-tRNA reductase of Syntrophobacter fumaroxidans (strain DSM 10017 / MPOB).